The following is a 26-amino-acid chain: Toxin b subunit alpha (26 aa).

Toxin b is a heterodimer composed of toxin alpha and toxin beta. As to expression, expressed by the venom gland.

It is found in the secreted. Functionally, binds to sodium channels (Nav) and affects the channel activation process. This Androctonus crassicauda (Arabian fat-tailed scorpion) protein is Toxin b subunit alpha.